The sequence spans 284 residues: NAD kinase (284 aa).

Asp60 functions as the Proton acceptor in the catalytic mechanism. Residues 60 to 61 (DG), 134 to 135 (NE), Arg145, Lys162, Asp164, 175 to 180 (TAYSFS), and Gln234 each bind NAD(+).

This sequence belongs to the NAD kinase family. A divalent metal cation serves as cofactor.

Its subcellular location is the cytoplasm. It carries out the reaction NAD(+) + ATP = ADP + NADP(+) + H(+). In terms of biological role, involved in the regulation of the intracellular balance of NAD and NADP, and is a key enzyme in the biosynthesis of NADP. Catalyzes specifically the phosphorylation on 2'-hydroxyl of the adenosine moiety of NAD to yield NADP. The sequence is that of NAD kinase from Clostridium botulinum (strain Alaska E43 / Type E3).